A 440-amino-acid chain; its full sequence is MSEFSQTVPELVAWARKNDFSISLPVDRLSFLLAVATLNGERLDGEMSEGELVDAFRHVSDAFEQTSETIGVRANNAINDMVRQRLLNRFTSEQAEGNAIYRLTPLGIGITDYYIRQREFSTLRLSMQLSIVAGELKRAADAADEGGDEFHWHRNVYAPLKYSVAEIFDSIDLTQRIMDEQQQQVKDDIAQLLNKDWRAAISSCELLLSETSGTLRELQDTLEAAGDKLQANLLRIQDATMAHDDLHFVDRLVFDLQSKLDRIISWGQQSIDLWIGYDRHVHKFIRTAIDMDKNRVFAQRLRQSIQGYFDEPWALTYANADRLLDMRDEEMALRDEEVTGELPPDLEYEEFNEIREQLAAIIEEQLAIYKSRQAPLDLGLVVREYLAQYPRARHFDVARIVIDQAVRLGVAQADFTGLPAKWQPINDYGAKVQAHVIDKY.

The interval 208–236 (LSETSGTLRELQDTLEAAGDKLQANLLRI) is leucine-zipper.

Belongs to the MukF family. Interacts, and probably forms a ternary complex, with MukE and MukB via its C-terminal region. The complex formation is stimulated by calcium or magnesium. It is required for an interaction between MukE and MukB.

It is found in the cytoplasm. The protein resides in the nucleoid. Involved in chromosome condensation, segregation and cell cycle progression. May participate in facilitating chromosome segregation by condensation DNA from both sides of a centrally located replisome during cell division. Not required for mini-F plasmid partitioning. Probably acts via its interaction with MukB and MukE. Overexpression results in anucleate cells. It has a calcium binding activity. This Citrobacter koseri (strain ATCC BAA-895 / CDC 4225-83 / SGSC4696) protein is Chromosome partition protein MukF.